Reading from the N-terminus, the 365-residue chain is Aminomethyltransferase (365 aa).

The protein belongs to the GcvT family. As to quaternary structure, the glycine cleavage system is composed of four proteins: P, T, L and H.

It catalyses the reaction N(6)-[(R)-S(8)-aminomethyldihydrolipoyl]-L-lysyl-[protein] + (6S)-5,6,7,8-tetrahydrofolate = N(6)-[(R)-dihydrolipoyl]-L-lysyl-[protein] + (6R)-5,10-methylene-5,6,7,8-tetrahydrofolate + NH4(+). The glycine cleavage system catalyzes the degradation of glycine. The protein is Aminomethyltransferase of Frankia alni (strain DSM 45986 / CECT 9034 / ACN14a).